A 192-amino-acid polypeptide reads, in one-letter code: Ion-translocating oxidoreductase complex subunit B (192 aa).

The interval 1–26 (MNAIWIAVAAVSLLGLAFGAILGYAS) is hydrophobic. A 4Fe-4S domain is found at 32-91 (EDDPVVEKIDEILPQSQCGQCGYPGCRPYAEAISCNGEKINRCAPGGEAVMLKIAELLNV). Residues cysteine 49, cysteine 52, cysteine 57, cysteine 74, cysteine 117, cysteine 120, cysteine 123, cysteine 127, cysteine 147, cysteine 150, cysteine 153, and cysteine 157 each contribute to the [4Fe-4S] cluster site. 2 consecutive 4Fe-4S ferredoxin-type domains span residues 108-137 (MVAV…GATR) and 138-167 (VMHT…LQPV).

The protein belongs to the 4Fe4S bacterial-type ferredoxin family. RnfB subfamily. In terms of assembly, the complex is composed of six subunits: RsxA, RsxB, RsxC, RsxD, RsxE and RsxG. It depends on [4Fe-4S] cluster as a cofactor.

The protein localises to the cell inner membrane. Its function is as follows. Part of a membrane-bound complex that couples electron transfer with translocation of ions across the membrane. Required to maintain the reduced state of SoxR. The chain is Ion-translocating oxidoreductase complex subunit B from Shigella boydii serotype 4 (strain Sb227).